The following is a 164-amino-acid chain: Kunitz-type trypsin inhibitor BrTI (164 aa).

This sequence belongs to the leguminous Kunitz-type inhibitor family.

In terms of biological role, inhibitor of trypsin and human plasma kallikrein with a Ki of 2.9 nM and 14.0 nM, respectively. Does not inhibit chymotrypsin, porcine pancreatic elastas, human neutrophil elastase, coagulation factor Xa, human thrombin, porcine pancreatic kallikrein or plasmin. This Bauhinia rufa (Orchid tree) protein is Kunitz-type trypsin inhibitor BrTI.